A 147-amino-acid chain; its full sequence is Lysozyme C (147 aa).

Residues 1–18 (MRSLLILVLCFLPLAALG) form the signal peptide. Positions 19–147 (KVFGRCELAA…VQAWIRGCRL (129 aa)) constitute a C-type lysozyme domain. Disulfide bonds link cysteine 24/cysteine 145, cysteine 48/cysteine 133, cysteine 82/cysteine 98, and cysteine 94/cysteine 112. Residues glutamate 53 and aspartate 70 contribute to the active site. A substrate-binding site is contributed by aspartate 119.

The protein belongs to the glycosyl hydrolase 22 family. Monomer. In terms of tissue distribution, in the egg white and polymorphonuclear leukocytes.

The protein resides in the secreted. It carries out the reaction Hydrolysis of (1-&gt;4)-beta-linkages between N-acetylmuramic acid and N-acetyl-D-glucosamine residues in a peptidoglycan and between N-acetyl-D-glucosamine residues in chitodextrins.. Its function is as follows. Lysozymes have primarily a bacteriolytic function; those in tissues and body fluids are associated with the monocyte-macrophage system and enhance the activity of immunoagents. Has bacteriolytic activity against M.luteus. The chain is Lysozyme C (LYZ) from Gallus gallus (Chicken).